The primary structure comprises 520 residues: Macrophage receptor MARCO (520 aa).

Over M1–N43 the chain is Cytoplasmic. Residues F44–V64 traverse the membrane as a helical; Signal-anchor for type II membrane protein segment. The Extracellular portion of the chain corresponds to V65 to V520. Residues N83 and N136 are each glycosylated (N-linked (GlcNAc...) asparagine). The interval G142 to S423 is disordered. In terms of domain architecture, Collagen-like spans K147–E419. Low complexity-rich tracts occupy residues E203–E227, L290–T345, and S380–D398. Over residues V410–E419 the composition is skewed to basic and acidic residues. Positions V424–S519 constitute an SRCR domain. 3 disulfide bridges follow: C447/C508, C460/C518, and C488/C498.

Homotrimer; disulfide-linked. Trimers may assemble in larger oligomers thus resulting in the creation of a large surface capable of interacting with very large ligands. In terms of processing, N-glycosylated. Expressed in alveolar macrophages (at protein level). Detected in macrophages from various tissues including thymus, kidney, Kupffer cells of liver, and spleen.

The protein localises to the cell membrane. Its function is as follows. Pattern recognition receptor (PRR) which binds Gram-positive and Gram-negative bacteria. Also plays a role in binding of unopsonized particles by alveolar macrophages. Binds to the secretoglobin SCGB3A2. This is Macrophage receptor MARCO (MARCO) from Homo sapiens (Human).